Consider the following 159-residue polypeptide: Deoxyuridine 5'-triphosphate nucleotidohydrolase (159 aa).

Residues 78–80 (RSG), Asn-91, 95–97 (LID), and Met-105 contribute to the substrate site.

Belongs to the dUTPase family. Mg(2+) serves as cofactor.

The catalysed reaction is dUTP + H2O = dUMP + diphosphate + H(+). It participates in pyrimidine metabolism; dUMP biosynthesis; dUMP from dCTP (dUTP route): step 2/2. Its function is as follows. This enzyme is involved in nucleotide metabolism: it produces dUMP, the immediate precursor of thymidine nucleotides and it decreases the intracellular concentration of dUTP so that uracil cannot be incorporated into DNA. The polypeptide is Deoxyuridine 5'-triphosphate nucleotidohydrolase (Buchnera aphidicola subsp. Schizaphis graminum (strain Sg)).